Here is a 509-residue protein sequence, read N- to C-terminus: Aldehyde dehydrogenase 1A1 (509 aa).

Residues I175 to N178, K201 to E204, G234 to P235, G254 to S255, and E277 to G279 contribute to the NAD(+) site. E277 (proton acceptor) is an active-site residue. C311 (nucleophile) is an active-site residue. NAD(+)-binding positions include E357–K361 and E408–F410.

It belongs to the aldehyde dehydrogenase family. As to quaternary structure, homotetramer.

It localises to the cytoplasm. The protein localises to the cytosol. The protein resides in the cell projection. It is found in the axon. The catalysed reaction is an aldehyde + NAD(+) + H2O = a carboxylate + NADH + 2 H(+). The enzyme catalyses all-trans-retinal + NAD(+) + H2O = all-trans-retinoate + NADH + 2 H(+). It carries out the reaction 9-cis-retinal + NAD(+) + H2O = 9-cis-retinoate + NADH + 2 H(+). It catalyses the reaction 11-cis-retinal + NAD(+) + H2O = 11-cis-retinoate + NADH + 2 H(+). The catalysed reaction is 13-cis-retinal + NAD(+) + H2O = 13-cis-retinoate + NADH + 2 H(+). The enzyme catalyses 3-deoxyglucosone + NAD(+) + H2O = 2-dehydro-3-deoxy-D-gluconate + NADH + 2 H(+). It carries out the reaction (E)-4-hydroxynon-2-enal + NAD(+) + H2O = (E)-4-hydroxynon-2-enoate + NADH + 2 H(+). It catalyses the reaction malonaldehyde + NAD(+) + H2O = 3-oxopropanoate + NADH + 2 H(+). The catalysed reaction is hexanal + NAD(+) + H2O = hexanoate + NADH + 2 H(+). The enzyme catalyses propanal + NAD(+) + H2O = propanoate + NADH + 2 H(+). It carries out the reaction acetaldehyde + NAD(+) + H2O = acetate + NADH + 2 H(+). It catalyses the reaction benzaldehyde + NAD(+) + H2O = benzoate + NADH + 2 H(+). The catalysed reaction is 4-aminobutanal + NAD(+) + H2O = 4-aminobutanoate + NADH + 2 H(+). It participates in cofactor metabolism; retinol metabolism. In terms of biological role, cytosolic dehydrogenase that catalyzes the irreversible oxidation of a wide range of aldehydes to their corresponding carboxylic acid. Functions downstream of retinol dehydrogenases and catalyzes the oxidation of retinaldehyde into retinoic acid, the second step in the oxidation of retinol/vitamin A into retinoic acid. This pathway is crucial to control the levels of retinol and retinoic acid, two important molecules which excess can be teratogenic and cytotoxic. Also oxidizes aldehydes resulting from lipid peroxidation like (E)-4-hydroxynon-2-enal/HNE, malonaldehyde and hexanal that form protein adducts and are highly cytotoxic. By participating for instance to the clearance of (E)-4-hydroxynon-2-enal/HNE in the lens epithelium prevents the formation of HNE-protein adducts and lens opacification. Also functions downstream of fructosamine-3-kinase in the fructosamine degradation pathway by catalyzing the oxidation of 3-deoxyglucosone, the carbohydrate product of fructosamine 3-phosphate decomposition, which is itself a potent glycating agent that may react with lysine and arginine side-chains of proteins. Also has an aminobutyraldehyde dehydrogenase activity and is probably part of an alternative pathway for the biosynthesis of GABA/4-aminobutanoate in midbrain, thereby playing a role in GABAergic synaptic transmission. The polypeptide is Aldehyde dehydrogenase 1A1 (Gallus gallus (Chicken)).